Reading from the N-terminus, the 176-residue chain is Flavodoxin (176 aa).

The Flavodoxin-like domain maps to 4–165; sequence IGIFFGSDTG…RVEKWVKQVA (162 aa).

Belongs to the flavodoxin family. FMN is required as a cofactor.

Low-potential electron donor to a number of redox enzymes. The protein is Flavodoxin (fldA) of Klebsiella pneumoniae.